A 216-amino-acid chain; its full sequence is Octanoyltransferase (216 aa).

The BPL/LPL catalytic domain occupies 34-209 (ENTIDEIWLV…KMNQQLDYSH (176 aa)). Substrate is bound by residues 73 to 80 (RGGQITFH), 140 to 142 (SLG), and 153 to 155 (GLA). The Acyl-thioester intermediate role is filled by C171.

Belongs to the LipB family.

Its subcellular location is the cytoplasm. It catalyses the reaction octanoyl-[ACP] + L-lysyl-[protein] = N(6)-octanoyl-L-lysyl-[protein] + holo-[ACP] + H(+). The protein operates within protein modification; protein lipoylation via endogenous pathway; protein N(6)-(lipoyl)lysine from octanoyl-[acyl-carrier-protein]: step 1/2. Functionally, catalyzes the transfer of endogenously produced octanoic acid from octanoyl-acyl-carrier-protein onto the lipoyl domains of lipoate-dependent enzymes. Lipoyl-ACP can also act as a substrate although octanoyl-ACP is likely to be the physiological substrate. This chain is Octanoyltransferase, found in Psychromonas ingrahamii (strain DSM 17664 / CCUG 51855 / 37).